The primary structure comprises 643 residues: Ecto-NOX disulfide-thiol exchanger 1 (643 aa).

Residues 142 to 221 (KTVFVGGLPE…GRLHVDFAQA (80 aa)) form the RRM domain. 2 coiled-coil regions span residues 307-342 (VQSA…LTGI) and 425-521 (QAYA…QLKG).

Belongs to the ENOX family. Cu cation serves as cofactor.

Its subcellular location is the cell membrane. It localises to the secreted. The protein localises to the extracellular space. Its activity is regulated as follows. Not inhibited by the antitumor sulfonylurea LY181984, the vabilloid capsaicin, and retinoids. Probably acts as a terminal oxidase of plasma electron transport from cytosolic NAD(P)H via hydroquinones to acceptors at the cell surface. Hydroquinone oxidase activity alternates with a protein disulfide-thiol interchange/oxidoreductase activity which may control physical membrane displacements associated with vesicle budding or cell enlargement. The activities oscillate with a period length of 24 minutes and play a role in control of the ultradian cellular biological clock. The chain is Ecto-NOX disulfide-thiol exchanger 1 (Enox1) from Mus musculus (Mouse).